The sequence spans 186 residues: MAQRERNREDRGREERDSEFVDKLVHINRVAKVVKGGRRFGFAALVVVGDQKGRVGFGHGKAREVPEAIRKATEAAKRDMIFVPLRSGRTLHHDVEGRHGAGKVLLRAAPAGKGIIAGGPMRAVFETLGVQDVVAKSLGSSNPYNMVRATFDALKHQMHPKDIAAQRGIKYSTLQARRHDVVGSEE.

The 64-residue stretch at 20–83 folds into the S5 DRBM domain; the sequence is FVDKLVHINR…EAAKRDMIFV (64 aa).

This sequence belongs to the universal ribosomal protein uS5 family. As to quaternary structure, part of the 30S ribosomal subunit. Contacts proteins S4 and S8.

With S4 and S12 plays an important role in translational accuracy. Functionally, located at the back of the 30S subunit body where it stabilizes the conformation of the head with respect to the body. The sequence is that of Small ribosomal subunit protein uS5 from Brucella anthropi (strain ATCC 49188 / DSM 6882 / CCUG 24695 / JCM 21032 / LMG 3331 / NBRC 15819 / NCTC 12168 / Alc 37) (Ochrobactrum anthropi).